A 387-amino-acid polypeptide reads, in one-letter code: Succinate--CoA ligase [ADP-forming] subunit beta (387 aa).

ATP is bound by residues Lys-46, 53-55 (GRG), Glu-99, Cys-102, and Glu-107. Residues Asn-196 and Asp-210 each coordinate Mg(2+). Residues Asn-261 and 318–320 (GIV) each bind substrate.

The protein belongs to the succinate/malate CoA ligase beta subunit family. As to quaternary structure, heterotetramer of two alpha and two beta subunits. The cofactor is Mg(2+).

It carries out the reaction succinate + ATP + CoA = succinyl-CoA + ADP + phosphate. The enzyme catalyses GTP + succinate + CoA = succinyl-CoA + GDP + phosphate. It participates in carbohydrate metabolism; tricarboxylic acid cycle; succinate from succinyl-CoA (ligase route): step 1/1. Succinyl-CoA synthetase functions in the citric acid cycle (TCA), coupling the hydrolysis of succinyl-CoA to the synthesis of either ATP or GTP and thus represents the only step of substrate-level phosphorylation in the TCA. The beta subunit provides nucleotide specificity of the enzyme and binds the substrate succinate, while the binding sites for coenzyme A and phosphate are found in the alpha subunit. The sequence is that of Succinate--CoA ligase [ADP-forming] subunit beta from Campylobacter hominis (strain ATCC BAA-381 / DSM 21671 / CCUG 45161 / LMG 19568 / NCTC 13146 / CH001A).